A 296-amino-acid chain; its full sequence is UDP-N-acetylenolpyruvoylglucosamine reductase (296 aa).

Residues 26-191 (RIGGPANYFK…LSATFRLSKS (166 aa)) form the FAD-binding PCMH-type domain. Arg170 is an active-site residue. Catalysis depends on Cys218, which acts as the Proton donor. The active site involves Glu287.

Belongs to the MurB family. FAD is required as a cofactor.

It is found in the cytoplasm. The catalysed reaction is UDP-N-acetyl-alpha-D-muramate + NADP(+) = UDP-N-acetyl-3-O-(1-carboxyvinyl)-alpha-D-glucosamine + NADPH + H(+). It functions in the pathway cell wall biogenesis; peptidoglycan biosynthesis. Functionally, cell wall formation. The sequence is that of UDP-N-acetylenolpyruvoylglucosamine reductase from Chlamydia felis (strain Fe/C-56) (Chlamydophila felis).